The following is a 218-amino-acid chain: Cytochrome b6 (218 aa).

A helical membrane pass occupies residues 35–55 (IFYCLGGITLVCFLIQFATGF). C38 provides a ligand contact to heme c. Heme b-binding residues include H89 and H103. 3 consecutive transmembrane segments (helical) span residues 93–113 (ASMM…TGGF), 119–139 (LTWI…VTGY), and 189–209 (LHTF…FLMI). Heme b contacts are provided by H190 and H205.

Belongs to the cytochrome b family. PetB subfamily. As to quaternary structure, the 4 large subunits of the cytochrome b6-f complex are cytochrome b6, subunit IV (17 kDa polypeptide, PetD), cytochrome f and the Rieske protein, while the 4 small subunits are PetG, PetL, PetM and PetN. The complex functions as a dimer. The cofactor is heme b. Heme c is required as a cofactor.

It is found in the cellular thylakoid membrane. Functionally, component of the cytochrome b6-f complex, which mediates electron transfer between photosystem II (PSII) and photosystem I (PSI), cyclic electron flow around PSI, and state transitions. This chain is Cytochrome b6, found in Prochlorococcus marinus (strain NATL1A).